Consider the following 703-residue polypeptide: Prolyl 3-hydroxylase 2 (703 aa).

The signal sequence occupies residues 1–21; the sequence is MRESTWVSLLLLLLLPAPQRG. The interval 18–40 is disordered; it reads PQRGGPQDGRGSPEPEPERGPLQ. TPR repeat units lie at residues 42–75, 144–177, 205–238, and 301–334; these read FDLL…HRRL, RVPY…NPEH, HLES…YFNE, and PLHY…HPDD. N-linked (GlcNAc...) asparagine glycans are attached at residues asparagine 444, asparagine 455, and asparagine 544. A Fe2OG dioxygenase domain is found at 552-666; it reads THMVCRTALS…RCAVALWFTL (115 aa). Residues histidine 575, aspartate 577, and histidine 647 each coordinate Fe cation. Arginine 657 is an active-site residue. Residues 700–703 carry the Prevents secretion from ER motif; the sequence is KDEL.

The protein belongs to the leprecan family. It depends on Fe cation as a cofactor. The cofactor is L-ascorbate. Detected at low levels in cartilage.

Its subcellular location is the endoplasmic reticulum. The protein resides in the sarcoplasmic reticulum. It localises to the golgi apparatus. The catalysed reaction is L-prolyl-[collagen] + 2-oxoglutarate + O2 = trans-3-hydroxy-L-prolyl-[collagen] + succinate + CO2. Functionally, prolyl 3-hydroxylase that catalyzes the post-translational formation of 3-hydroxyproline on collagens. Contributes to proline 3-hydroxylation of collagen COL4A1 and COL1A1 in tendons, the eye sclera and in the eye lens capsule. Has high activity with the type IV collagen COL4A1, and lower activity with COL1A1. Catalyzes hydroxylation of the first Pro in Gly-Pro-Hyp sequences where Hyp is 4-hydroxyproline. Has no activity on substrates that lack 4-hydroxyproline in the third position. This chain is Prolyl 3-hydroxylase 2, found in Rattus norvegicus (Rat).